A 148-amino-acid polypeptide reads, in one-letter code: Snaclec B3/B5 (148 aa).

Positions 1–24 are cleaved as a signal peptide; that stretch reads MGRFIFVSFGLLVVFLSLSGTGAA. Intrachain disulfides connect cysteine 27/cysteine 38, cysteine 55/cysteine 144, and cysteine 121/cysteine 136. Residues 34 to 145 enclose the C-type lectin domain; the sequence is YDQHCYKVFD…CRLLGHFVCK (112 aa).

The protein belongs to the snaclec family. In terms of assembly, heterodimer; disulfide-linked. In terms of tissue distribution, expressed by the venom gland.

Its subcellular location is the secreted. Interferes with one step of hemostasis (modulation of platelet aggregation, or coagulation cascade, for example). This Macrovipera lebetinus (Levantine viper) protein is Snaclec B3/B5.